The chain runs to 291 residues: Phosphatidylserine decarboxylase proenzyme (291 aa).

Active-site charge relay system; for autoendoproteolytic cleavage activity residues include Asp90, His147, and Ser253. Ser253 serves as the catalytic Schiff-base intermediate with substrate; via pyruvic acid; for decarboxylase activity. The residue at position 253 (Ser253) is a Pyruvic acid (Ser); by autocatalysis.

The protein belongs to the phosphatidylserine decarboxylase family. PSD-B subfamily. Prokaryotic type I sub-subfamily. As to quaternary structure, heterodimer of a large membrane-associated beta subunit and a small pyruvoyl-containing alpha subunit. The cofactor is pyruvate. In terms of processing, is synthesized initially as an inactive proenzyme. Formation of the active enzyme involves a self-maturation process in which the active site pyruvoyl group is generated from an internal serine residue via an autocatalytic post-translational modification. Two non-identical subunits are generated from the proenzyme in this reaction, and the pyruvate is formed at the N-terminus of the alpha chain, which is derived from the carboxyl end of the proenzyme. The autoendoproteolytic cleavage occurs by a canonical serine protease mechanism, in which the side chain hydroxyl group of the serine supplies its oxygen atom to form the C-terminus of the beta chain, while the remainder of the serine residue undergoes an oxidative deamination to produce ammonia and the pyruvoyl prosthetic group on the alpha chain. During this reaction, the Ser that is part of the protease active site of the proenzyme becomes the pyruvoyl prosthetic group, which constitutes an essential element of the active site of the mature decarboxylase.

It is found in the cell membrane. It carries out the reaction a 1,2-diacyl-sn-glycero-3-phospho-L-serine + H(+) = a 1,2-diacyl-sn-glycero-3-phosphoethanolamine + CO2. It participates in phospholipid metabolism; phosphatidylethanolamine biosynthesis; phosphatidylethanolamine from CDP-diacylglycerol: step 2/2. Catalyzes the formation of phosphatidylethanolamine (PtdEtn) from phosphatidylserine (PtdSer). The sequence is that of Phosphatidylserine decarboxylase proenzyme from Photobacterium profundum (strain SS9).